Consider the following 457-residue polypeptide: PDZ and LIM domain protein 7 (457 aa).

A PDZ domain is found at 1 to 85 (MDSFKVVLEG…RLSLGLSRAQ (85 aa)). S78 carries the post-translational modification Phosphoserine. Disordered regions lie at residues 82–166 (SRAQ…QSRS) and 186–226 (FMKK…PWAV). Position 96 is a phosphothreonine (T96). At R103 the chain carries Asymmetric dimethylarginine. S111 is subject to Phosphoserine. Positions 126-135 (DSTLRQNGQL) are enriched in polar residues. Basic and acidic residues predominate over residues 144–157 (SKQRLMEDTEDWRP). S247 bears the Phosphoserine mark. LIM zinc-binding domains follow at residues 280-338 (PVCH…VRYA), 339-398 (PNCA…MFGT), and 399-457 (KCRG…FSHV).

As to quaternary structure, specifically binds via its LIM zinc-binding 3 domain (LIM 3) domain to endocytic codes of INSR, but not with those of IGF1R, LDLR, TFRC, or EGFR. Interacts with various PKC isoforms through the LIM zinc-binding domains. Binds to RET in a phosphorylation-independent manner via its LIM zinc-binding domain 2 (LIM 2). Probably part of a complex with SHC and the RET dimer. Interacts with TPM2, TBX4 and TBX5.

Its subcellular location is the cytoplasm. It localises to the cytoskeleton. Functionally, may function as a scaffold on which the coordinated assembly of proteins can occur. May play a role as an adapter that, via its PDZ domain, localizes LIM-binding proteins to actin filaments of both skeletal muscle and nonmuscle tissues. Involved in both of the two fundamental mechanisms of bone formation, direct bone formation (e.g. embryonic flat bones mandible and cranium), and endochondral bone formation (e.g. embryonic long bone development). Plays a role during fracture repair. Involved in BMP6 signaling pathway. This Mus musculus (Mouse) protein is PDZ and LIM domain protein 7 (Pdlim7).